A 484-amino-acid polypeptide reads, in one-letter code: MSVKGDIGVIGLAVMGQNLILNMNDHGFKVVAYNRTTSKVDEFLQGAAKGTNIIGAYSLEDLAAKLEKPRKVMLMVRAGDVVDQFIEALLPHLEEGDIIIDGGNSNYPDTNRRVKALAEKGIRFIGSGVSGGEEGARHGPSIMPGGNQEAWQYVKPIFQAISAKTEQGEPCCDWVGGEGAGHFVKMVHNGIEYGDMQLICEAYQFLKEGLGLSYEEMQAIFAEWKNTELDSYLIDITTDILGYKDASGEPLVEKILDTAGQKGTGKWTGINALDFGIPLTLITESVFARCVSSFKDQRVAANQLFGKTITPVEGDKKVWIEAVRKALLASKIISYAQGFMLIREASEQFGWDINYGATALLWREGCIIRSRFLGNIRDAYEANPNLVFLGSDSYFKGILENALSDWRKVVAKSIEVGIPMPCMASAITFLDGYTSARLPANLLQAQRDYFGAHTYERTDKPRGEFFHTNWTGRGGNTASTTYDV.

Residues 11–16, 34–36, 76–78, and Asn-104 each bind NADP(+); these read GLAVMG, NRT, and VRA. Substrate-binding positions include Asn-104 and 130–132; that span reads SGG. Residue Lys-185 is the Proton acceptor of the active site. 188–189 provides a ligand contact to substrate; it reads HN. The active-site Proton donor is the Glu-192. Positions 193, 262, 289, 447, and 453 each coordinate substrate.

The protein belongs to the 6-phosphogluconate dehydrogenase family. Homodimer.

The catalysed reaction is 6-phospho-D-gluconate + NADP(+) = D-ribulose 5-phosphate + CO2 + NADPH. It participates in carbohydrate degradation; pentose phosphate pathway; D-ribulose 5-phosphate from D-glucose 6-phosphate (oxidative stage): step 3/3. Functionally, catalyzes the oxidative decarboxylation of 6-phosphogluconate to ribulose 5-phosphate and CO(2), with concomitant reduction of NADP to NADPH. The protein is 6-phosphogluconate dehydrogenase, decarboxylating (gnd) of Haemophilus influenzae (strain ATCC 51907 / DSM 11121 / KW20 / Rd).